The primary structure comprises 340 residues: Aliphatic sulfonates import ATP-binding protein SsuB 1 (340 aa).

Residues 44–72 (THHHARVAAQGHARGDAQPPAGALARDDG) are disordered. The ABC transporter domain maps to 80 to 299 (VQLRGVGKRY…ARASAGFAAL (220 aa)). 112–119 (GRSGCGKS) contacts ATP.

This sequence belongs to the ABC transporter superfamily. Aliphatic sulfonates importer (TC 3.A.1.17.2) family. The complex is composed of two ATP-binding proteins (SsuB), two transmembrane proteins (SsuC) and a solute-binding protein (SsuA).

The protein resides in the cell inner membrane. The catalysed reaction is ATP + H2O + aliphatic sulfonate-[sulfonate-binding protein]Side 1 = ADP + phosphate + aliphatic sulfonateSide 2 + [sulfonate-binding protein]Side 1.. Functionally, part of the ABC transporter complex SsuABC involved in aliphatic sulfonates import. Responsible for energy coupling to the transport system. The protein is Aliphatic sulfonates import ATP-binding protein SsuB 1 of Paraburkholderia xenovorans (strain LB400).